Here is a 257-residue protein sequence, read N- to C-terminus: NAD kinase (257 aa).

Aspartate 44 (proton acceptor) is an active-site residue. NAD(+) contacts are provided by residues 44–45 (DG), arginine 49, 116–117 (NE), aspartate 146, alanine 154, and 157–162 (TAYNLS).

Belongs to the NAD kinase family. A divalent metal cation is required as a cofactor.

It is found in the cytoplasm. The enzyme catalyses NAD(+) + ATP = ADP + NADP(+) + H(+). Involved in the regulation of the intracellular balance of NAD and NADP, and is a key enzyme in the biosynthesis of NADP. Catalyzes specifically the phosphorylation on 2'-hydroxyl of the adenosine moiety of NAD to yield NADP. This chain is NAD kinase, found in Rhizorhabdus wittichii (strain DSM 6014 / CCUG 31198 / JCM 15750 / NBRC 105917 / EY 4224 / RW1) (Sphingomonas wittichii).